Reading from the N-terminus, the 85-residue chain is Probable [Fe-S]-dependent transcriptional repressor (85 aa).

Residues Cys-56, Cys-61, Cys-64, and Cys-71 each coordinate iron-sulfur cluster.

Belongs to the FeoC family.

Its function is as follows. May function as a transcriptional regulator that controls feoABC expression. The protein is Probable [Fe-S]-dependent transcriptional repressor of Yersinia pseudotuberculosis serotype O:1b (strain IP 31758).